The chain runs to 24 residues: Protein YriA (24 aa).

The polypeptide is Protein YriA (Escherichia coli (strain K12)).